Reading from the N-terminus, the 479-residue chain is mRNA export factor ICP27 homolog (479 aa).

Over residues 1–15 the composition is skewed to low complexity; it reads MVPSQRLSRTSSISS. 2 disordered regions span residues 1–78 and 92–210; these read MVPS…SSVV and KWDL…NKPW. Acidic residues predominate over residues 35–44; sequence TDCDMDPMEG. Over residues 132-142 the composition is skewed to basic and acidic residues; it reads EVHGCTDESYG. Zn(2+) is bound by residues Cys354, His445, Cys449, and Cys454. The segment at 354–454 adopts a CHC2-type zinc-finger fold; the sequence is CFLPNTRDYN…HTRDCRSASC (101 aa).

It belongs to the HHV-1 ICP27 protein family. In terms of assembly, interacts with host XPO1 and with the XPO1 export pathway components small GTPase RAN and nucleoporin NUP214. Interacts with host SPEN, OTT1 and OTT3. Interacts with host SRSF1, SRSF3, SRSF7 and SRPK1. Interacts with host DHX9; this interaction may have an inhibitory effect on virion production. Interacts (via N-terminus) with host NXF1; this interaction plays a role in mRNA export. Post-translationally, phosphorylated by cellular protein kinase CK2.

The protein localises to the host nucleus. It localises to the host cytoplasm. Promotes the nuclear export of a subset of early and late viral mRNAs by interacting with mRNAs and cellular export proteins. Additionally may prevent the establishment of cellular antiviral state, by acting as an alternative splicing factor for cellular RNAs such as STAT1, resulting in a STAT1 mRNA incapable of producing the STAT1alpha isoform. The chain is mRNA export factor ICP27 homolog from Homo sapiens (Human).